We begin with the raw amino-acid sequence, 282 residues long: 3-methyl-2-oxobutanoate hydroxymethyltransferase (282 aa).

D45 and D84 together coordinate Mg(2+). 3-methyl-2-oxobutanoate contacts are provided by residues 45 to 46 (DS), D84, and K114. E116 contacts Mg(2+). E183 acts as the Proton acceptor in catalysis.

It belongs to the PanB family. In terms of assembly, homodecamer; pentamer of dimers. The cofactor is Mg(2+).

The protein resides in the cytoplasm. It carries out the reaction 3-methyl-2-oxobutanoate + (6R)-5,10-methylene-5,6,7,8-tetrahydrofolate + H2O = 2-dehydropantoate + (6S)-5,6,7,8-tetrahydrofolate. It participates in cofactor biosynthesis; (R)-pantothenate biosynthesis; (R)-pantoate from 3-methyl-2-oxobutanoate: step 1/2. In terms of biological role, catalyzes the reversible reaction in which hydroxymethyl group from 5,10-methylenetetrahydrofolate is transferred onto alpha-ketoisovalerate to form ketopantoate. This is 3-methyl-2-oxobutanoate hydroxymethyltransferase from Syntrophobacter fumaroxidans (strain DSM 10017 / MPOB).